Consider the following 344-residue polypeptide: MDEVIVEYIRRTVLKIPRDEIMAVLQKWGFLSEAQLQTINFRQTKEGISHSVAQLCEESSADLKQAALLDIIYNHIYPNKRVWSVYHMNKTGEETDFFDFRDFKKKFRRQIQSALINVTINFREYEDNAIWIRIAWGTPYTKPNQYKTSYVVYHSQTPYVFISASVLRSNLPLLCQAMVVASNYHDIHEMELRSHCLNSLKDIVFKRYSQNFQTNYPLQERNVLTENVDLRINDENRSEKERIYRLNQESFGNGPQPKLDFAQYKLETMFKSDPKWDVLEKKEPFRCLVKFSSPHLLESLKSLAPAGLADAPLSPLLTCIPQKARNYFKIREKKSLHPGSFVSP.

The protein belongs to the CENP-N/CHL4 family.

The protein localises to the nucleus. It is found in the chromosome. The protein resides in the centromere. Probable component of a centromeric complex involved in assembly of kinetochore proteins, mitotic progression and chromosome segregation. The chain is Centromere protein N (CENPN) from Gallus gallus (Chicken).